The sequence spans 196 residues: UMP-CMP kinase (196 aa).

13–18 (GAGKGT) serves as a coordination point for ATP. Residues 33 to 63 (SAGDLLRDERKKPDSQYGELIESYIRDGRIV) form an NMP region. A ribonucleoside 5'-phosphate-binding positions include Arg39, 61 to 63 (RIV), and 93 to 96 (GFPR). Position 100 (Asn100) interacts with CMP. The tract at residues 133-143 (ERGKSSGRSDD) is LID. Arg134 contributes to the ATP binding site. A ribonucleoside 5'-phosphate-binding residues include Arg140 and Arg151. Lys179 lines the ATP pocket.

Belongs to the adenylate kinase family. UMP-CMP kinase subfamily. In terms of assembly, monomer. Mg(2+) is required as a cofactor.

It is found in the cytoplasm. The protein resides in the nucleus. The catalysed reaction is CMP + ATP = CDP + ADP. The enzyme catalyses dCMP + ATP = dCDP + ADP. It carries out the reaction UMP + ATP = UDP + ADP. It catalyses the reaction a 2'-deoxyribonucleoside 5'-diphosphate + ATP = a 2'-deoxyribonucleoside 5'-triphosphate + ADP. The catalysed reaction is a ribonucleoside 5'-diphosphate + ATP = a ribonucleoside 5'-triphosphate + ADP. In terms of biological role, catalyzes the phosphorylation of pyrimidine nucleoside monophosphates at the expense of ATP. Plays an important role in de novo pyrimidine nucleotide biosynthesis. Has preference for UMP and CMP as phosphate acceptors. Also displays broad nucleoside diphosphate kinase activity. The sequence is that of UMP-CMP kinase (cmpk1) from Xenopus tropicalis (Western clawed frog).